We begin with the raw amino-acid sequence, 252 residues long: Ribosomal RNA small subunit methyltransferase A (252 aa).

S-adenosyl-L-methionine is bound by residues asparagine 10, leucine 12, glycine 36, glutamate 57, aspartate 81, and asparagine 98.

It belongs to the class I-like SAM-binding methyltransferase superfamily. rRNA adenine N(6)-methyltransferase family. RsmA subfamily.

The protein localises to the cytoplasm. It catalyses the reaction adenosine(1518)/adenosine(1519) in 16S rRNA + 4 S-adenosyl-L-methionine = N(6)-dimethyladenosine(1518)/N(6)-dimethyladenosine(1519) in 16S rRNA + 4 S-adenosyl-L-homocysteine + 4 H(+). Its function is as follows. Specifically dimethylates two adjacent adenosines (A1518 and A1519) in the loop of a conserved hairpin near the 3'-end of 16S rRNA in the 30S particle. May play a critical role in biogenesis of 30S subunits. The protein is Ribosomal RNA small subunit methyltransferase A of Mycoplasmopsis pulmonis (strain UAB CTIP) (Mycoplasma pulmonis).